A 119-amino-acid chain; its full sequence is UPF0102 protein Athe_0977 (119 aa).

Belongs to the UPF0102 family.

The polypeptide is UPF0102 protein Athe_0977 (Caldicellulosiruptor bescii (strain ATCC BAA-1888 / DSM 6725 / KCTC 15123 / Z-1320) (Anaerocellum thermophilum)).